A 625-amino-acid chain; its full sequence is Autophagy-related protein 20 (625 aa).

The interval 1–59 (MNPNDNNLFGDIEQDNNPSFYGNQSFLRDPYGKSKQTCPPSVTSNGDPSITNDDNNSAH) is disordered. Composition is skewed to polar residues over residues 15-26 (DNNPSFYGNQSF) and 34-59 (SKQTCPPSVTSNGDPSITNDDNNSAH). In terms of domain architecture, PX spans 79–202 (NDPNLQINVI…HKFLDPNYEL (124 aa)). A 1,2-diacyl-sn-glycero-3-phospho-(1D-myo-inositol-3-phosphate) is bound by residues R118, S120, K144, and R167.

Belongs to the sorting nexin family.

Its subcellular location is the endosome membrane. The protein localises to the preautophagosomal structure membrane. In terms of biological role, required for cytoplasm to vacuole transport (Cvt), pexophagy and mitophagy. Also involved in endoplasmic reticulum-specific autophagic process and is essential for the survival of cells subjected to severe ER stress. Functions in protein retrieval from the endocytic pathway. This is Autophagy-related protein 20 (ATG20) from Debaryomyces hansenii (strain ATCC 36239 / CBS 767 / BCRC 21394 / JCM 1990 / NBRC 0083 / IGC 2968) (Yeast).